An 86-amino-acid polypeptide reads, in one-letter code: Small ribosomal subunit protein uS17 (86 aa).

This sequence belongs to the universal ribosomal protein uS17 family. In terms of assembly, part of the 30S ribosomal subunit.

Its function is as follows. One of the primary rRNA binding proteins, it binds specifically to the 5'-end of 16S ribosomal RNA. The sequence is that of Small ribosomal subunit protein uS17 from Helicobacter acinonychis (strain Sheeba).